Here is a 79-residue protein sequence, read N- to C-terminus: Biotin synthase auxiliary protein (79 aa).

Belongs to the BsaP family. The cofactor is iron-sulfur cluster.

In terms of biological role, required for the activity of the biotin synthase BioB. The sequence is that of Biotin synthase auxiliary protein from Mycobacterium bovis (strain ATCC BAA-935 / AF2122/97).